The sequence spans 469 residues: UDP-N-acetylmuramate--L-alanine ligase (469 aa).

118-124 (GTHGKTT) is an ATP binding site.

This sequence belongs to the MurCDEF family.

It localises to the cytoplasm. It carries out the reaction UDP-N-acetyl-alpha-D-muramate + L-alanine + ATP = UDP-N-acetyl-alpha-D-muramoyl-L-alanine + ADP + phosphate + H(+). It participates in cell wall biogenesis; peptidoglycan biosynthesis. Its function is as follows. Cell wall formation. This chain is UDP-N-acetylmuramate--L-alanine ligase, found in Lachnoclostridium phytofermentans (strain ATCC 700394 / DSM 18823 / ISDg) (Clostridium phytofermentans).